The sequence spans 1025 residues: Multidrug resistance protein MdtC (1025 aa).

Transmembrane regions (helical) follow at residues 15 to 35, 333 to 353, 360 to 380, 387 to 407, 431 to 451, 469 to 489, 528 to 548, 851 to 871, 875 to 895, 897 to 917, 953 to 973, and 984 to 1004; these read ILISLAITLCGILGFRLLPVA, EVEQTLVISVALVILVVFLFL, LIPAVAVPVSLIGTFAAMYLC, LSLMALTIATGFVVDDAIVVL, VGFTVLSMSLSLVAVFLPLLL, VAIGISLAVSLTLTPMMCGWL, LTGLVVLGTIALSVWLYISIP, AQVILILAAIATVYIVLGMLY, VHPLTILSTLPSAGVGALLAL, IFDAPFSLIALIGIMLLIGIV, PIMMTTLAALFGALPLVLSGG, and ITIVGGLVMSQLLTLYTTPVV.

This sequence belongs to the resistance-nodulation-cell division (RND) (TC 2.A.6) family. MdtC subfamily. As to quaternary structure, part of a tripartite efflux system composed of MdtA, MdtB and MdtC. MdtC forms a heteromultimer with MdtB.

It is found in the cell inner membrane. The protein is Multidrug resistance protein MdtC of Klebsiella pneumoniae (strain 342).